Reading from the N-terminus, the 211-residue chain is Urease accessory protein UreG (211 aa).

GTP is bound at residue G11–T18.

It belongs to the SIMIBI class G3E GTPase family. UreG subfamily. In terms of assembly, homodimer. UreD, UreF and UreG form a complex that acts as a GTP-hydrolysis-dependent molecular chaperone, activating the urease apoprotein by helping to assemble the nickel containing metallocenter of UreC. The UreE protein probably delivers the nickel.

It localises to the cytoplasm. Functionally, facilitates the functional incorporation of the urease nickel metallocenter. This process requires GTP hydrolysis, probably effectuated by UreG. The chain is Urease accessory protein UreG from Laribacter hongkongensis (strain HLHK9).